A 369-amino-acid polypeptide reads, in one-letter code: MAWPCITRACCIARFWNQLDKADIAVPLVFTKYSEATEQPLPAQIPRSAAAPIDTQPGGDARAAGGGDAAPGPARPGTAPHGSPPADSVMRHDYKPWKVQRPEPSCKPKSEYQPSDTPFEKETQYQKDFRAWPIPKRGDHPWIPKAGPSPVLGPERGSPEKAAQEKRRKKEEEAEADEEHPKAARPGDAREKGRQRGDEAGGQEGRGRAAADALNRQIKEEVVAAGVSSSYRNEFRPWIDVKPVKAIKAKAQYKPPEEKMTHETSYSAQFKGETSKPAPADNKFLERRRIRTLYSEPYKEPPKVEKPSVKPSKPKKTTTSHKPLKKAKDKQIASGRAAKKKSAETSNTAKPEDKEKSKEMNNKLAEAKE.

Disordered regions lie at residues 41 to 213 (LPAQ…AADA) and 251 to 369 (AQYK…EAKE). The span at 70-80 (APGPARPGTAP) shows a compositional bias: low complexity. 2 mn regions span residues 87–110 (DSVMRHDYKPWKVQRPEPSCKPKS) and 122–145 (ETQYQKDFRAWPIPKRGDHPWIPK). 3 stretches are compositionally biased toward basic and acidic residues: residues 89-110 (VMRHDYKPWKVQRPEPSCKPKS), 118-142 (PFEKETQYQKDFRAWPIPKRGDHPW), and 179-209 (EHPKAARPGDAREKGRQRGDEAGGQEGRGRA). The mn 3 stretch occupies residues 228–251 (SSSYRNEFRPWIDVKPVKAIKAKA). Residues 297 to 308 (PYKEPPKVEKPS) are compositionally biased toward basic and acidic residues. Positions 312–328 (SKPKKTTTSHKPLKKAK) are enriched in basic residues. The span at 350–369 (KPEDKEKSKEMNNKLAEAKE) shows a compositional bias: basic and acidic residues.

This sequence belongs to the STOP family.

Its subcellular location is the cytoplasm. It localises to the cytoskeleton. In terms of biological role, involved in microtubule stabilization in many cell types, including neuronal cells. Specifically has microtubule cold stabilizing activity. Involved in dendrite morphogenesis and maintenance by regulating lysosomal trafficking. This is Microtubule-associated protein 6 homolog (MAP6) from Gallus gallus (Chicken).